Reading from the N-terminus, the 394-residue chain is Alpha-2B adrenergic receptor (394 aa).

Residues 1 to 25 (AIAAVITFLILFTIFGNALVILAVL) traverse the membrane as a helical segment. Topologically, residues 26–36 (TSRSLRAPQNL) are cytoplasmic. Residues 37 to 62 (FLVSLAAADILVATLIIPFSLANELL) form a helical membrane-spanning segment. Topologically, residues 63–72 (GYWYFRRTWC) are extracellular. Cysteine 72 and cysteine 151 form a disulfide bridge. A helical membrane pass occupies residues 73 to 95 (EVYLALDVLFCTSSIVHLCAISL). Over 96–117 (DRYWAVSRALEYNCKRTPRRIK) the chain is Cytoplasmic. Residues 118–140 (CIILTVWLIAAAISLPPLIYKGD) form a helical membrane-spanning segment. Over 141-156 (QGPQPHGAPQCKLNQE) the chain is Extracellular. The chain crosses the membrane as a helical span at residues 157–180 (AWYILSSSLGSFFVPCLIMILVYL). Topologically, residues 181 to 358 (RIYLIAKRSH…LSREKRFTFV (178 aa)) are cytoplasmic. The segment at 191 to 318 (RRGPRAKGGP…GSPPLQQPQG (128 aa)) is disordered. Positions 281 to 298 (LEEEAEEEEEEEEEEDEP) are enriched in acidic residues. The span at 299 to 312 (QAVPVSPASVGSPP) shows a compositional bias: low complexity. The chain crosses the membrane as a helical span at residues 359 to 382 (LAVVIGVFVLCWFPFFFSYSLSAI). The Extracellular portion of the chain corresponds to 383 to 391 (CPQQCRVPH). A helical membrane pass occupies residues 392-394 (GLF).

It belongs to the G-protein coupled receptor 1 family. Adrenergic receptor subfamily. ADRA2B sub-subfamily. As to quaternary structure, interacts with RAB26. Interacts with PPP1R9B. Interacts with GGA1, GGA2 and GGA3.

Its subcellular location is the cell membrane. Alpha-2 adrenergic receptors mediate the catecholamine-induced inhibition of adenylate cyclase through the action of G proteins. This chain is Alpha-2B adrenergic receptor (ADRA2B), found in Oryctolagus cuniculus (Rabbit).